The sequence spans 119 residues: Protein RALF-like 22 (119 aa).

The signal sequence occupies residues 1–23 (MTNTRAIYAVIAILAIVISAVES). The propeptide at 24–70 (TGDFGDSLDFVRAGSSSLFSGCTGSIAECIAEEEEMEFDSDISRRIL) is removed in mature form. Disulfide bonds link cysteine 88/cysteine 98 and cysteine 111/cysteine 117.

This sequence belongs to the plant rapid alkalinization factor (RALF) family. In terms of processing, proteolytically cleaved, probably by S1P, a subtilisin-like serine protease (subtilase).

It is found in the secreted. In terms of biological role, cell signaling peptide that may regulate plant stress, growth, and development. Mediates a rapid alkalinization of extracellular space by mediating a transient increase in the cytoplasmic Ca(2+) concentration leading to a calcium-dependent signaling events through a cell surface receptor and a concomitant activation of some intracellular mitogen-activated protein kinases. The protein is Protein RALF-like 22 (RALFL22) of Arabidopsis thaliana (Mouse-ear cress).